The following is an 87-amino-acid chain: Mitochondrial import inner membrane translocase subunit TIM9 (87 aa).

At methionine 1 the chain carries N-acetylmethionine. The Twin CX3C motif signature appears at 35–59 (CFTDCVNDFTTSKLTNKEQTCIMKC). 2 disulfides stabilise this stretch: cysteine 35-cysteine 59 and cysteine 39-cysteine 55.

This sequence belongs to the small Tim family. Heterohexamer; composed of 3 copies of TIM9 and 3 copies of TIM10, named soluble 70 kDa complex. Associates with the TIM12 component of the TIM22 complex, whose core is composed of TIM18, TIM22 and TIM54. Interacts with the transmembrane regions of multi-pass transmembrane proteins in transit.

The protein resides in the mitochondrion inner membrane. It localises to the mitochondrion intermembrane space. Mitochondrial intermembrane chaperone that participates in the import and insertion of multi-pass transmembrane proteins into the mitochondrial inner membrane. Also required for the transfer of beta-barrel precursors from the TOM complex to the sorting and assembly machinery (SAM complex) of the outer membrane. Acts as a chaperone-like protein that protects the hydrophobic precursors from aggregation and guide them through the mitochondrial intermembrane space. Compared to TIM10, it may have a strong structural role. The protein is Mitochondrial import inner membrane translocase subunit TIM9 (TIM9) of Saccharomyces cerevisiae (strain ATCC 204508 / S288c) (Baker's yeast).